A 315-amino-acid polypeptide reads, in one-letter code: Phosphatidylglycerol--prolipoprotein diacylglyceryl transferase (315 aa).

2 consecutive transmembrane segments (helical) span residues 19 to 39 (FTIH…VWIL) and 93 to 113 (VWEG…VAFL). R141 provides a ligand contact to a 1,2-diacyl-sn-glycero-3-phospho-(1'-sn-glycerol). The next 2 helical transmembrane spans lie at 188 to 208 (LFHP…ALII) and 256 to 276 (MWTA…LYQY).

It belongs to the Lgt family.

It localises to the cell membrane. The enzyme catalyses L-cysteinyl-[prolipoprotein] + a 1,2-diacyl-sn-glycero-3-phospho-(1'-sn-glycerol) = an S-1,2-diacyl-sn-glyceryl-L-cysteinyl-[prolipoprotein] + sn-glycerol 1-phosphate + H(+). It participates in protein modification; lipoprotein biosynthesis (diacylglyceryl transfer). In terms of biological role, catalyzes the transfer of the diacylglyceryl group from phosphatidylglycerol to the sulfhydryl group of the N-terminal cysteine of a prolipoprotein, the first step in the formation of mature lipoproteins. This is Phosphatidylglycerol--prolipoprotein diacylglyceryl transferase from Bifidobacterium longum subsp. infantis (strain ATCC 15697 / DSM 20088 / JCM 1222 / NCTC 11817 / S12).